The chain runs to 185 residues: Peptidyl-tRNA hydrolase (185 aa).

Position 14 (Y14) interacts with tRNA. Residue H19 is the Proton acceptor of the active site. Y65, N67, and N113 together coordinate tRNA.

The protein belongs to the PTH family. Monomer.

It is found in the cytoplasm. The enzyme catalyses an N-acyl-L-alpha-aminoacyl-tRNA + H2O = an N-acyl-L-amino acid + a tRNA + H(+). Hydrolyzes ribosome-free peptidyl-tRNAs (with 1 or more amino acids incorporated), which drop off the ribosome during protein synthesis, or as a result of ribosome stalling. Its function is as follows. Catalyzes the release of premature peptidyl moieties from peptidyl-tRNA molecules trapped in stalled 50S ribosomal subunits, and thus maintains levels of free tRNAs and 50S ribosomes. This chain is Peptidyl-tRNA hydrolase, found in Rickettsia felis (strain ATCC VR-1525 / URRWXCal2) (Rickettsia azadi).